A 1378-amino-acid polypeptide reads, in one-letter code: F-box protein At3g54460 (1378 aa).

A compositionally biased stretch (basic and acidic residues) spans 65 to 96 (GDHDVENSGTIEDGRLETPQKRRKCVEGESSG). Residues 65–113 (GDHDVENSGTIEDGRLETPQKRRKCVEGESSGKRKTPKSKRRVLSGSKE) are disordered. Over residues 97-107 (KRKTPKSKRRV) the composition is skewed to basic residues. In terms of domain architecture, F-box spans 282–328 (VSGVWDLSDDVLISILMKLDTKDLFSIAAVCRLFRSLTSLIVPCMNL). The CW-type zinc finger occupies 571 to 622 (DVESDIWMQCDSCSKWRRIIDEGVSVTGSAWFCSNNNDPAYQSCNDPEELWD). The Zn(2+) site is built by Cys-580, Cys-583, Cys-603, and Cys-614. One can recognise a Helicase ATP-binding domain in the interval 720-885 (KWFYPKFLEN…LSHIQPLLKF (166 aa)). 733–740 (DVPALKVA) contacts ATP. The short motif at 834–837 (DEGH) is the DEAH box element. Residues 1185–1324 (DCGSQMVFVD…DAEKSDRLLS (140 aa)) enclose the Helicase C-terminal domain.

It belongs to the helicase family.

This is F-box protein At3g54460 from Arabidopsis thaliana (Mouse-ear cress).